Reading from the N-terminus, the 253-residue chain is Phosphate import ATP-binding protein PstB (253 aa).

The 249-residue stretch at Met-1–Leu-249 folds into the ABC transporter domain. Gly-38 to Ser-45 contributes to the ATP binding site.

It belongs to the ABC transporter superfamily. Phosphate importer (TC 3.A.1.7) family. In terms of assembly, the complex is composed of two ATP-binding proteins (PstB), two transmembrane proteins (PstC and PstA) and a solute-binding protein (PstS).

The protein resides in the cell membrane. It catalyses the reaction phosphate(out) + ATP + H2O = ADP + 2 phosphate(in) + H(+). Part of the ABC transporter complex PstSACB involved in phosphate import. Responsible for energy coupling to the transport system. In Aeropyrum pernix (strain ATCC 700893 / DSM 11879 / JCM 9820 / NBRC 100138 / K1), this protein is Phosphate import ATP-binding protein PstB.